The following is a 161-amino-acid chain: Regulator of ribonuclease activity A (161 aa).

It belongs to the RraA family. Homotrimer. Binds to both RNA-binding sites in the C-terminal region of Rne and to RhlB.

Its subcellular location is the cytoplasm. Globally modulates RNA abundance by binding to RNase E (Rne) and regulating its endonucleolytic activity. Can modulate Rne action in a substrate-dependent manner by altering the composition of the degradosome. Modulates RNA-binding and helicase activities of the degradosome. This chain is Regulator of ribonuclease activity A, found in Pectobacterium atrosepticum (strain SCRI 1043 / ATCC BAA-672) (Erwinia carotovora subsp. atroseptica).